The primary structure comprises 176 residues: Nucleoside triphosphate/diphosphate phosphatase (176 aa).

Catalysis depends on Arg-23, which acts as the Proton donor. The Mg(2+) site is built by Asn-87, Asp-103, Asp-105, Asp-107, Asp-120, and Glu-123.

Belongs to the Ntdp family. Mg(2+) serves as cofactor.

The catalysed reaction is a ribonucleoside 5'-triphosphate + H2O = a ribonucleoside 5'-diphosphate + phosphate + H(+). It carries out the reaction a ribonucleoside 5'-diphosphate + H2O = a ribonucleoside 5'-phosphate + phosphate + H(+). Its function is as follows. Has nucleoside phosphatase activity towards nucleoside triphosphates and nucleoside diphosphates. This Bacillus velezensis (strain DSM 23117 / BGSC 10A6 / LMG 26770 / FZB42) (Bacillus amyloliquefaciens subsp. plantarum) protein is Nucleoside triphosphate/diphosphate phosphatase.